Here is a 344-residue protein sequence, read N- to C-terminus: L-rhamnose-proton symporter (344 aa).

Transmembrane regions (helical) follow at residues Ala-4–Ala-24, Trp-38–Leu-58, Phe-68–Ile-88, Met-101–Ile-121, Thr-137–Leu-157, Leu-175–Ala-195, Leu-214–Ile-234, Val-259–Gly-279, Ile-290–Leu-310, and Val-323–Ala-343.

This sequence belongs to the L-rhamnose transporter (TC 2.A.7.6) family.

It is found in the cell inner membrane. The enzyme catalyses L-rhamnopyranose(in) + H(+)(in) = L-rhamnopyranose(out) + H(+)(out). Its function is as follows. Uptake of L-rhamnose across the cytoplasmic membrane with the concomitant transport of protons into the cell (symport system). The sequence is that of L-rhamnose-proton symporter from Escherichia coli O9:H4 (strain HS).